Consider the following 381-residue polypeptide: Succinyl-diaminopimelate desuccinylase (381 aa).

His-70 lines the Zn(2+) pocket. The active site involves Asp-72. Position 103 (Asp-103) interacts with Zn(2+). Catalysis depends on Glu-136, which acts as the Proton acceptor. Glu-137, Glu-165, and His-354 together coordinate Zn(2+).

Belongs to the peptidase M20A family. DapE subfamily. As to quaternary structure, homodimer. Zn(2+) is required as a cofactor. Requires Co(2+) as cofactor.

It carries out the reaction N-succinyl-(2S,6S)-2,6-diaminopimelate + H2O = (2S,6S)-2,6-diaminopimelate + succinate. Its pathway is amino-acid biosynthesis; L-lysine biosynthesis via DAP pathway; LL-2,6-diaminopimelate from (S)-tetrahydrodipicolinate (succinylase route): step 3/3. In terms of biological role, catalyzes the hydrolysis of N-succinyl-L,L-diaminopimelic acid (SDAP), forming succinate and LL-2,6-diaminopimelate (DAP), an intermediate involved in the bacterial biosynthesis of lysine and meso-diaminopimelic acid, an essential component of bacterial cell walls. The polypeptide is Succinyl-diaminopimelate desuccinylase (Roseobacter denitrificans (strain ATCC 33942 / OCh 114) (Erythrobacter sp. (strain OCh 114))).